The following is a 606-amino-acid chain: Endonuclease 8-like 3 (606 aa).

Val-2 functions as the Schiff-base intermediate with DNA; via amino nitrogen in the catalytic mechanism. The disordered stretch occupies residues 31 to 51 (ALQGLGGPGSPPAAPGPMGTS). 2 residues coordinate DNA: Asn-194 and Arg-273. The FPG-type zinc finger occupies 249 to 283 (KVYKRPNCGQCCCKITVCRLGENNRMTYFCPHCQK). The RanBP2-type zinc finger occupies 319-348 (SEEQWTCEVCTLINKLSSKTCDACLTSRPA). Position 451 is a phosphoserine (Ser-451). Residues Cys-508, His-511, Cys-534, Cys-542, Cys-555, His-557, Cys-580, and Cys-588 each contribute to the Zn(2+) site. 2 GRF-type zinc fingers span residues 508-551 (CSKH…ADLS) and 555-597 (CNHG…AQNG).

Belongs to the FPG family.

It is found in the nucleus. The protein localises to the chromosome. It carries out the reaction 2'-deoxyribonucleotide-(2'-deoxyribose 5'-phosphate)-2'-deoxyribonucleotide-DNA = a 3'-end 2'-deoxyribonucleotide-(2,3-dehydro-2,3-deoxyribose 5'-phosphate)-DNA + a 5'-end 5'-phospho-2'-deoxyribonucleoside-DNA + H(+). DNA glycosylase which prefers single-stranded DNA (ssDNA), or partially ssDNA structures such as bubble and fork structures, to double-stranded DNA (dsDNA). Mediates interstrand cross-link repair in response to replication stress: acts by mediating DNA glycosylase activity, cleaving one of the two N-glycosyl bonds comprising the interstrand cross-link, which avoids the formation of a double-strand break but generates an abasic site that is bypassed by translesion synthesis polymerases. In vitro, displays strong glycosylase activity towards the hydantoin lesions spiroiminodihydantoin (Sp) and guanidinohydantoin (Gh) in both ssDNA and dsDNA; also recognizes FapyA, FapyG, 5-OHU, 5-OHC, 5-OHMH, Tg and 8-oxoA lesions in ssDNA. No activity on 8-oxoG detected. Also shows weak DNA-(apurinic or apyrimidinic site) lyase activity. In vivo, appears to be the primary enzyme involved in removing Sp and Gh from ssDNA in neonatal tissues. The polypeptide is Endonuclease 8-like 3 (NEIL3) (Bos taurus (Bovine)).